Reading from the N-terminus, the 170-residue chain is Lipoprotein signal peptidase (170 aa).

3 helical membrane passes run 12-32 (WYWVVVLVFLADQLSKQWVLA), 67-87 (WQRWLFTIVAVGFSSLLTVWL), and 93-113 (SLLKLNLAYTLVIGGALGNLV). Residues D123 and D141 contribute to the active site. A helical transmembrane segment spans residues 137-157 (FNIADSAIFIGAVLIIWDSFF).

Belongs to the peptidase A8 family.

The protein localises to the cell inner membrane. It carries out the reaction Release of signal peptides from bacterial membrane prolipoproteins. Hydrolyzes -Xaa-Yaa-Zaa-|-(S,diacylglyceryl)Cys-, in which Xaa is hydrophobic (preferably Leu), and Yaa (Ala or Ser) and Zaa (Gly or Ala) have small, neutral side chains.. The protein operates within protein modification; lipoprotein biosynthesis (signal peptide cleavage). Its function is as follows. This protein specifically catalyzes the removal of signal peptides from prolipoproteins. This chain is Lipoprotein signal peptidase, found in Shewanella oneidensis (strain ATCC 700550 / JCM 31522 / CIP 106686 / LMG 19005 / NCIMB 14063 / MR-1).